Reading from the N-terminus, the 81-residue chain is Cytotoxin 3d (81 aa).

Positions Met-1 to Thr-21 are cleaved as a signal peptide. Disulfide bonds link Cys-24–Cys-42, Cys-35–Cys-59, Cys-63–Cys-74, and Cys-75–Cys-80.

Belongs to the three-finger toxin family. Short-chain subfamily. Type IA cytotoxin sub-subfamily. As to quaternary structure, monomer in solution; Homodimer and oligomer in the presence of negatively charged lipids forming a pore with a size ranging between 20 and 30 Angstroms. In terms of tissue distribution, expressed by the venom gland.

Its subcellular location is the secreted. The protein localises to the target cell membrane. Functionally, shows cytolytic activity on many different cells by forming pore in lipid membranes. In vivo, increases heart rate or kills the animal by cardiac arrest. In addition, it binds to heparin with high affinity, interacts with Kv channel-interacting protein 1 (KCNIP1) in a calcium-independent manner, and binds to integrin alpha-V/beta-3 (ITGAV/ITGB3) with moderate affinity. The chain is Cytotoxin 3d from Naja atra (Chinese cobra).